The sequence spans 94 residues: Co-chaperonin GroES (94 aa).

It belongs to the GroES chaperonin family. As to quaternary structure, heptamer of 7 subunits arranged in a ring. Interacts with the chaperonin GroEL.

The protein localises to the cytoplasm. Together with the chaperonin GroEL, plays an essential role in assisting protein folding. The GroEL-GroES system forms a nano-cage that allows encapsulation of the non-native substrate proteins and provides a physical environment optimized to promote and accelerate protein folding. GroES binds to the apical surface of the GroEL ring, thereby capping the opening of the GroEL channel. The chain is Co-chaperonin GroES from Lactobacillus acidophilus (strain ATCC 700396 / NCK56 / N2 / NCFM).